The following is a 496-amino-acid chain: Iroquois-class homeodomain protein irx-4-A (496 aa).

The homeobox; TALE-type DNA-binding region spans 141-203 (GSSRRKNATR…NARRRLKKEN (63 aa)). A disordered region spans residues 203–246 (NKMTWPPRNKCSDEKRPYDEEEEEEEEEEDSQKATIKNEKKTVD). Over residues 221–232 (DEEEEEEEEEED) the composition is skewed to acidic residues.

Belongs to the TALE/IRO homeobox family. In terms of tissue distribution, expressed in the neural plate in overlapping patterns with other irx members, which all share an anterior border of expression. At stage 20, expressed in a subset of cells in the developing hindbrain with expression appearing above the otic vesicle by stage 26. Expression in retina cells begins at stage 28, continuing at later stages and is limited to a subset of retinal cells of the optic cup. Also expressed in the ventricle of the heart from stage 36 (late tailbud) onwards. Only expressed in the pronephros at tadpole stage.

Its subcellular location is the nucleus. In terms of biological role, acts partially redundantly with other irx members in neural patterning. Required for formation of the posterior forebrain, midbrain, hindbrain, and to a lesser extent, spinal cord. Patterns the neuroectoderm in both the anterior/posterior and dorsal/ventral axes. Does not appear to play a role in pronephros kidney development. This Xenopus laevis (African clawed frog) protein is Iroquois-class homeodomain protein irx-4-A (irx4-a).